A 278-amino-acid chain; its full sequence is MSTLRVLHEKSELGKTTVYPKEYAPHLLLPIPRDLNRKTLNVNVSEPPPFYGYDLWNAYELSWLNEKGKPFAARGEFIIPATSSHLIESKSFKLYLNSFNNERFADAAAVSQTMKRDLSKRVNESVTVNFILHETEIPVAYSPKGSLLDVLDIAIDTYSPDPNLLSTSQETVTETLYSHLLKSNCPVTGQPDWGSIEIHYTGPKIDHAQLLKYIISYRNHEEFHEACVERFFMDILRHCRPQELTVQARYTRRGGLDINPYRSTNPTFSVQNHRSFRQ.

87 to 89 (IES) is a binding site for substrate. 89–90 (SK) lines the NADPH pocket. The Thioimide intermediate role is filled by cysteine 185. The Proton donor role is filled by aspartate 192. 224–225 (HE) contacts substrate. 253-254 (RG) lines the NADPH pocket. A disordered region spans residues 255–278 (GLDINPYRSTNPTFSVQNHRSFRQ). A compositionally biased stretch (polar residues) spans 261–278 (YRSTNPTFSVQNHRSFRQ).

Belongs to the GTP cyclohydrolase I family. QueF type 2 subfamily. In terms of assembly, homodimer.

It localises to the cytoplasm. The catalysed reaction is 7-aminomethyl-7-carbaguanine + 2 NADP(+) = 7-cyano-7-deazaguanine + 2 NADPH + 3 H(+). It participates in tRNA modification; tRNA-queuosine biosynthesis. Functionally, catalyzes the NADPH-dependent reduction of 7-cyano-7-deazaguanine (preQ0) to 7-aminomethyl-7-deazaguanine (preQ1). The protein is NADPH-dependent 7-cyano-7-deazaguanine reductase of Coxiella burnetii (strain Dugway 5J108-111).